A 774-amino-acid polypeptide reads, in one-letter code: Ion-translocating oxidoreductase complex subunit C (774 aa).

2 consecutive 4Fe-4S ferredoxin-type domains span residues 359–389 (ELPEPVPAMPCIRCGDCAQVCPVSLLPQQLH) and 399–428 (QLLAHNLFDCIECGACAYVCPSSIPLVQYY). [4Fe-4S] cluster is bound by residues Cys-369, Cys-372, Cys-375, Cys-379, Cys-408, Cys-411, Cys-414, and Cys-418. The segment covering 453 to 490 (EQRQARLRRDEERRAAERAQRAEKAALARAAQAEREEA) has biased composition (basic and acidic residues). The segment at 453–493 (EQRQARLRRDEERRAAERAQRAEKAALARAAQAEREEAAPA) is disordered.

The protein belongs to the 4Fe4S bacterial-type ferredoxin family. RnfC subfamily. In terms of assembly, the complex is composed of six subunits: RnfA, RnfB, RnfC, RnfD, RnfE and RnfG. It depends on [4Fe-4S] cluster as a cofactor.

It localises to the cell inner membrane. Part of a membrane-bound complex that couples electron transfer with translocation of ions across the membrane. The chain is Ion-translocating oxidoreductase complex subunit C from Pseudomonas aeruginosa (strain ATCC 15692 / DSM 22644 / CIP 104116 / JCM 14847 / LMG 12228 / 1C / PRS 101 / PAO1).